The following is a 119-amino-acid chain: Large ribosomal subunit protein bL20 (119 aa).

It belongs to the bacterial ribosomal protein bL20 family.

Functionally, binds directly to 23S ribosomal RNA and is necessary for the in vitro assembly process of the 50S ribosomal subunit. It is not involved in the protein synthesizing functions of that subunit. In Dehalococcoides mccartyi (strain ATCC BAA-2100 / JCM 16839 / KCTC 5957 / BAV1), this protein is Large ribosomal subunit protein bL20.